The following is a 446-amino-acid chain: NADH-ubiquinone oxidoreductase chain 4 (446 aa).

Helical transmembrane passes span 4–24, 56–76, 93–113, 114–134, 139–159, 182–202, 218–238, 245–265, 272–292, 297–317, 330–350, 373–393, and 426–446; these read IIFFLLFLIPFCFINNMYWMV, MLSYGLILLSLWICSLMLLAS, IIILLLLLILTFSSMSLFMFY, LFFESSLIPTLFLILGWGYQP, AGLYLLFYTLLVSLPMLIGIF, LLYFCLLCAFLVKMPMFLVHL, ILAGIMLKLGGYGMLRVISFL, YSFVWISISLVGGVLVSLVCL, ALIAYSSVAHMGIVLSGLLTM, LCGSYTLMIAHGLCSSGLFCL, MLINKGLLNFMPSMTLWWFLL, IVSWSWISMILLSFLSFFSAA, and LLHWLPLNLLILKSESFMLWL.

It belongs to the complex I subunit 4 family.

Its subcellular location is the mitochondrion membrane. The catalysed reaction is a ubiquinone + NADH + 5 H(+)(in) = a ubiquinol + NAD(+) + 4 H(+)(out). Functionally, core subunit of the mitochondrial membrane respiratory chain NADH dehydrogenase (Complex I) that is believed to belong to the minimal assembly required for catalysis. Complex I functions in the transfer of electrons from NADH to the respiratory chain. The immediate electron acceptor for the enzyme is believed to be ubiquinone. The sequence is that of NADH-ubiquinone oxidoreductase chain 4 (mt:ND4) from Drosophila melanogaster (Fruit fly).